The following is a 401-amino-acid chain: Mu-type opioid receptor (401 aa).

The Extracellular segment spans residues Met1–Val69. N-linked (GlcNAc...) asparagine glycosylation is found at Asn9, Asn12, Asn34, Asn41, and Asn49. The helical transmembrane segment at Thr70–Tyr94 threads the bilayer. Residues Val95–Asn107 are Cytoplasmic-facing. The helical transmembrane segment at Ile108–Leu132 threads the bilayer. Residues Met133–Cys143 lie on the Extracellular side of the membrane. Cys143 and Cys220 are disulfide-bonded. Residues Lys144–Val166 traverse the membrane as a helical segment. The Cytoplasmic segment spans residues Asp167–Asn186. At Tyr169 the chain carries Phosphotyrosine. The helical transmembrane segment at Ala187 to Met208 threads the bilayer. Residues Ala209–Trp231 lie on the Extracellular side of the membrane. A helical membrane pass occupies residues Glu232–Gly256. The Cytoplasmic portion of the chain corresponds to Leu257 to Arg280. The helical transmembrane segment at Ile281–Ala307 threads the bilayer. Residues Leu308 to Thr315 are Extracellular-facing. The helical transmembrane segment at Phe316–Tyr339 threads the bilayer. Residues Asn335–Tyr339 carry the NPxxY; plays a role in stabilizing the activated conformation of the receptor motif. Residues Ala340 to Pro401 are Cytoplasmic-facing. Cys354 is lipidated: S-palmitoyl cysteine. Residues Asn365–Arg385 form a disordered region. Position 366 is a phosphoserine (Ser366). Thr373 is modified (phosphothreonine). Phosphoserine is present on Ser378. Thr397 carries the phosphothreonine modification.

Belongs to the G-protein coupled receptor 1 family. In terms of assembly, forms homooligomers and heterooligomers with other GPCRs, such as OPRD1, OPRK1, OPRL1, NPFFR2, ADRA2A, SSTR2, CNR1 and CCR5 (probably in dimeric forms). Interacts with heterotrimeric G proteins; interaction with a heterotrimeric complex containing GNAI1, GNB1 and GNG2 stabilizes the active conformation of the receptor and increases its affinity for endomorphin-2, the synthetic opioid peptide DAMGO and for morphinan agonists. Interacts with PPL; the interaction disrupts agonist-mediated G-protein activation. Interacts (via C-terminus) with DNAJB4 (via C-terminus). Interacts with calmodulin; the interaction inhibits the constitutive activity of OPRM1; it abolishes basal and attenuates agonist-stimulated G-protein coupling. Interacts with FLNA, PLD2, RANBP9 and WLS and GPM6A. Interacts with RTP4. Interacts with SYP and GNAS. Interacts with RGS9, RGS17, RGS20, RGS4, PPP1R9B and HINT1. In terms of processing, phosphorylated. Differentially phosphorylated in basal and agonist-induced conditions. Agonist-mediated phosphorylation modulates receptor internalization. Phosphorylated by GRK2 in a agonist-dependent manner. Phosphorylation at Tyr-169 requires receptor activation, is dependent on non-receptor protein tyrosine kinase Src and results in a decrease in agonist efficacy by reducing G-protein coupling efficiency. Phosphorylated on tyrosine residues; the phosphorylation is involved in agonist-induced G-protein-independent receptor down-regulation. Phosphorylation at Ser-378 is involved in G-protein-dependent but not beta-arrestin-dependent activation of the ERK pathway. Post-translationally, ubiquitinated. A basal ubiquitination seems not to be related to degradation. Ubiquitination is increased upon formation of OPRM1:OPRD1 oligomers leading to proteasomal degradation; the ubiquitination is diminished by RTP4.

The protein resides in the cell membrane. Its subcellular location is the cell projection. It is found in the axon. It localises to the perikaryon. The protein localises to the dendrite. The protein resides in the endosome. Its function is as follows. Receptor for endogenous opioids such as beta-endorphin and endomorphin. Receptor for natural and synthetic opioids including morphine, heroin, DAMGO, fentanyl, etorphine, buprenorphin and methadone. Also activated by enkephalin peptides, such as Met-enkephalin or Met-enkephalin-Arg-Phe, with higher affinity for Met-enkephalin-Arg-Phe. Agonist binding to the receptor induces coupling to an inactive GDP-bound heterotrimeric G-protein complex and subsequent exchange of GDP for GTP in the G-protein alpha subunit leading to dissociation of the G-protein complex with the free GTP-bound G-protein alpha and the G-protein beta-gamma dimer activating downstream cellular effectors. The agonist- and cell type-specific activity is predominantly coupled to pertussis toxin-sensitive G(i) and G(o) G alpha proteins, GNAI1, GNAI2, GNAI3 and GNAO1, and to a lesser extent to pertussis toxin-insensitive G alpha proteins GNAZ and GNA15. They mediate an array of downstream cellular responses, including inhibition of adenylate cyclase activity and both N-type and L-type calcium channels, activation of inward rectifying potassium channels, mitogen-activated protein kinase (MAPK), phospholipase C (PLC), phosphoinositide/protein kinase (PKC), phosphoinositide 3-kinase (PI3K) and regulation of NF-kappa-B. Also couples to adenylate cyclase stimulatory G alpha proteins. The selective temporal coupling to G-proteins and subsequent signaling can be regulated by RGSZ proteins, such as RGS9, RGS17 and RGS4. Phosphorylation by members of the GPRK subfamily of Ser/Thr protein kinases and association with beta-arrestins is involved in short-term receptor desensitization. Beta-arrestins associate with the GPRK-phosphorylated receptor and uncouple it from the G-protein thus terminating signal transduction. The phosphorylated receptor is internalized through endocytosis via clathrin-coated pits which involves beta-arrestins. The activation of the ERK pathway occurs either in a G-protein-dependent or a beta-arrestin-dependent manner and is regulated by agonist-specific receptor phosphorylation. Acts as a class A G-protein coupled receptor (GPCR) which dissociates from beta-arrestin at or near the plasma membrane and undergoes rapid recycling. Receptor down-regulation pathways are varying with the agonist and occur dependent or independent of G-protein coupling. Endogenous ligands induce rapid desensitization, endocytosis and recycling. Heterooligomerization with other GPCRs can modulate agonist binding, signaling and trafficking properties. Involved in neurogenesis. The polypeptide is Mu-type opioid receptor (OPRM1) (Sus scrofa (Pig)).